An 876-amino-acid polypeptide reads, in one-letter code: Valine--tRNA ligase (876 aa).

The 'HIGH' region motif lies at 44–54 (PNVTGKLHLGH). The short motif at 520 to 524 (KMSKS) is the 'KMSKS' region element. Residue K523 participates in ATP binding. Positions 805–876 (LEGLIDMDKE…VKARIEQLKA (72 aa)) form a coiled coil.

The protein belongs to the class-I aminoacyl-tRNA synthetase family. ValS type 1 subfamily. In terms of assembly, monomer.

The protein localises to the cytoplasm. The enzyme catalyses tRNA(Val) + L-valine + ATP = L-valyl-tRNA(Val) + AMP + diphosphate. In terms of biological role, catalyzes the attachment of valine to tRNA(Val). As ValRS can inadvertently accommodate and process structurally similar amino acids such as threonine, to avoid such errors, it has a 'posttransfer' editing activity that hydrolyzes mischarged Thr-tRNA(Val) in a tRNA-dependent manner. The sequence is that of Valine--tRNA ligase from Staphylococcus aureus (strain Mu3 / ATCC 700698).